Here is a 361-residue protein sequence, read N- to C-terminus: Free fatty acid receptor 4 (361 aa).

The Extracellular segment spans residues 1–45; it reads MSPECARAAGDAPLRSLEQANRTRFPFFSDVKGDHRLVLAAVETT. The N-linked (GlcNAc...) asparagine glycan is linked to Asn-21. A helical membrane pass occupies residues 46–66; that stretch reads VLVLIFAVSLLGNVCALVLVA. At 67–77 the chain is on the cytoplasmic side; it reads RRRRRGATACL. Residues 78–98 traverse the membrane as a helical segment; sequence VLNLFCADLLFISAIPLVLAV. The Extracellular segment spans residues 99-112; the sequence is RWTEAWLLGPVACH. Cysteines 111 and 194 form a disulfide. A helical transmembrane segment spans residues 113-133; it reads LLFYVMTLSGSVTILTLAAVS. The Cytoplasmic portion of the chain corresponds to 134–156; the sequence is LERMVCIVHLQRGVRGPGRRARA. A helical membrane pass occupies residues 157–177; it reads VLLALIWGYSAVAALPLCVFF. Residues 178–204 are Extracellular-facing; it reads RVVPQRLPGADQEISICTLIWPTIPGE. Residues 205 to 225 form a helical membrane-spanning segment; the sequence is ISWDVSFVTLNFLVPGLVIVI. At 226–268 the chain is on the cytoplasmic side; the sequence is SYSKILQITKASRKRLTVSLAYSESHQIRVSQQDFRLFRTLFL. The chain crosses the membrane as a helical span at residues 269 to 289; it reads LMVSFFIMWSPIIITILLILI. At 290–295 the chain is on the extracellular side; that stretch reads QNFKQD. A helical transmembrane segment spans residues 296-316; the sequence is LVIWPSLFFWVVAFTFANSAL. Topologically, residues 317–361 are cytoplasmic; that stretch reads NPILYNMTLCRNEWKKIFCCFWFPEKGAILTDTSVKRNDLSIISG. Thr-347 and Thr-349 each carry phosphothreonine. 3 positions are modified to phosphoserine: Ser-350, Ser-357, and Ser-360.

The protein belongs to the G-protein coupled receptor 1 family. As to quaternary structure, interacts (via C-terminus) with ARRB2 following LCFAs stimulation. In terms of processing, phosphorylated at two clusters of Ser and Thr residues located in the intracellular C-terminus, a prerequisite for FFAR4 internalization via an ARRB2-dependent pathway. As to expression, the predominant isoform in human tissues. Expressed in adipose tissue, pancreatic islets, lung and brain. Expressed in alpha cells of pancreatic islets. Expressed in primary cilia of perivascular preadipocytes of white adipose tissue (at protein level). In terms of tissue distribution, abundant expression in the intestinal tract. Expressed in colonic intraepithelial neuroendocrine cells.

Its subcellular location is the cell membrane. It is found in the endosome membrane. The protein localises to the lysosome membrane. It localises to the cell projection. The protein resides in the cilium membrane. Functionally, G-protein-coupled receptor for long-chain fatty acids (LCFAs) with a major role in adipogenesis, energy metabolism and inflammation. Signals via G-protein and beta-arrestin pathways. LCFAs sensing initiates activation of phosphoinositidase C-linked G proteins GNAQ and GNA11 (G(q)/G(11)), inducing a variety of cellular responses via second messenger pathways such as intracellular calcium mobilization, modulation of cyclic adenosine monophosphate (cAMP) production, and mitogen-activated protein kinases (MAPKs). After LCFAs binding, associates with beta-arrestin ARRB2 that acts as an adapter protein coupling the receptor to specific downstream signaling pathways, as well as mediating receptor endocytosis. In response to dietary fats, plays an important role in the regulation of adipocyte proliferation and differentiation. Acts as a receptor for omega-3 polyunsaturated fatty acids (PUFAs) at primary cilium of perivascular preadipocytes, initiating an adipogenic program via cAMP and CTCF-dependent chromatin remodeling that ultimately results in transcriptional activation of adipogenic genes and cell cycle entry. Induces differentiation of brown adipocytes probably via autocrine and endocrine functions of FGF21 hormone. Activates brown adipocytes by initiating intracellular calcium signaling that leads to mitochondrial depolarization and fission, and overall increased mitochondrial respiration. Consequently stimulates fatty acid uptake and oxidation in mitochondria together with UCP1-mediated thermogenic respiration, eventually reducing fat mass. Regulates bi-potential differentiation of bone marrow mesenchymal stem cells toward osteoblasts or adipocytes likely by up-regulating distinct integrins. In response to dietary fats regulates hormone secretion and appetite. Stimulates GIP and GLP1 secretion from enteroendocrine cells as well as GCG secretion in pancreatic alpha cells, thereby playing a role in the regulation of blood glucose levels. Negatively regulates glucose-induced SST secretion in pancreatic delta cells. Mediates LCFAs inhibition of GHRL secretion, an appetite-controlling hormone. In taste buds, contributes to sensing of dietary fatty acids by the gustatory system. During the inflammatory response, promotes anti-inflammatory M2 macrophage differentiation in adipose tissue. Mediates the anti-inflammatory effects of omega-3 PUFAs via inhibition of NLRP3 inflammasome activation. In this pathway, interacts with adapter protein ARRB2 and inhibits the priming step triggered by Toll-like receptors (TLRs) at the level of TAK1 and TAB1. Further inhibits the activation step when ARRB2 directly associates with NLRP3, leading to inhibition of pro-inflammatory cytokine release. Mediates LCFAs anti-apoptotic effects. Its function is as follows. Receptor for LCFAs decoupled from G-protein signaling. May signal through beta-arrestin pathway. After LCFAs binding, associates with beta-arrestin ARRB2 that may act as an adapter protein coupling the receptor to specific downstream signaling pathways, as well as mediating receptor endocytosis. The sequence is that of Free fatty acid receptor 4 from Homo sapiens (Human).